A 230-amino-acid chain; its full sequence is Inactive 2-(S)-hydroxypropyl-CoM dehydrogenase 2 (230 aa).

It belongs to the short-chain dehydrogenases/reductases (SDR) family.

The chain is Inactive 2-(S)-hydroxypropyl-CoM dehydrogenase 2 from Xanthobacter autotrophicus (strain ATCC BAA-1158 / Py2).